Here is a 276-residue protein sequence, read N- to C-terminus: Reaction center protein L chain (276 aa).

3 helical membrane passes run 33 to 56 (GFFG…GAAL), 85 to 113 (GLWQ…RKLG), and 116 to 141 (YHIP…VMMG). (7R,8Z)-bacteriochlorophyll b is bound by residues His-154 and His-174. Residues 171-200 (NPAHMLGITLFFTTCLALALHGSLILSAAN) traverse the membrane as a helical segment. A Fe cation-binding site is contributed by His-191. Phe-217 contributes to the a ubiquinone binding site. The chain crosses the membrane as a helical span at residues 226-252 (GTLGIHRVGLILALSAVVWSIICMILS). His-231 contributes to the Fe cation binding site.

This sequence belongs to the reaction center PufL/M/PsbA/D family. As to quaternary structure, reaction center is composed of four bacteriochlorophylls, two bacteriopheophytins, two ubiquinones, one iron, and three highly hydrophobic polypeptide chains (designated L, M, and H).

It localises to the cellular chromatophore membrane. The reaction center is a membrane-bound complex that mediates the initial photochemical event in the electron transfer process of photosynthesis. This is Reaction center protein L chain (pufL) from Rhodospirillum rubrum.